The sequence spans 86 residues: Insulin-related peptide 2 (86 aa).

The N-terminal stretch at 1-19 is a signal peptide; the sequence is MKFYIVFALILACAACVSS. Residues 20–43 constitute a propeptide that is removed on maturation; sequence QEGTNFYCGRQLSRTLALVCWGAE. Residue R63 is modified to Arginine amide. Positions 67-86 are excised as a propeptide; sequence GPVDECCLKPCSIEEMLTYC.

The protein belongs to the insulin family. DAGWWVPPQSARALGGGR-amide: Expressed in corpora cardiaca (CC), corpora allata (CA), antennal lobe (AL) and gnathal ganglion (GNG) (at protein level). Expression in CC and CA detected in most animals, in AL in some animals and in GNG in few animals (at protein level).

The protein localises to the secreted. The chain is Insulin-related peptide 2 from Agrotis ipsilon (Black cutworm moth).